The chain runs to 245 residues: Biosynthetic peptidoglycan transglycosylase (245 aa).

The chain crosses the membrane as a helical span at residues 10 to 30 (FLALLFVVATLAQLWYLGQVL). The segment at 224 to 245 (DPGTVPLPPPPEPTAPPEGNTQ) is disordered. Over residues 226 to 239 (GTVPLPPPPEPTAP) the composition is skewed to pro residues.

The protein belongs to the glycosyltransferase 51 family.

The protein resides in the cell inner membrane. The catalysed reaction is [GlcNAc-(1-&gt;4)-Mur2Ac(oyl-L-Ala-gamma-D-Glu-L-Lys-D-Ala-D-Ala)](n)-di-trans,octa-cis-undecaprenyl diphosphate + beta-D-GlcNAc-(1-&gt;4)-Mur2Ac(oyl-L-Ala-gamma-D-Glu-L-Lys-D-Ala-D-Ala)-di-trans,octa-cis-undecaprenyl diphosphate = [GlcNAc-(1-&gt;4)-Mur2Ac(oyl-L-Ala-gamma-D-Glu-L-Lys-D-Ala-D-Ala)](n+1)-di-trans,octa-cis-undecaprenyl diphosphate + di-trans,octa-cis-undecaprenyl diphosphate + H(+). It functions in the pathway cell wall biogenesis; peptidoglycan biosynthesis. Peptidoglycan polymerase that catalyzes glycan chain elongation from lipid-linked precursors. This is Biosynthetic peptidoglycan transglycosylase from Alcanivorax borkumensis (strain ATCC 700651 / DSM 11573 / NCIMB 13689 / SK2).